The primary structure comprises 276 residues: 2,3,4,5-tetrahydropyridine-2,6-dicarboxylate N-succinyltransferase (276 aa).

The substrate site is built by Arg104 and Asp141.

Belongs to the transferase hexapeptide repeat family. As to quaternary structure, homotrimer.

The protein localises to the cytoplasm. The catalysed reaction is (S)-2,3,4,5-tetrahydrodipicolinate + succinyl-CoA + H2O = (S)-2-succinylamino-6-oxoheptanedioate + CoA. It participates in amino-acid biosynthesis; L-lysine biosynthesis via DAP pathway; LL-2,6-diaminopimelate from (S)-tetrahydrodipicolinate (succinylase route): step 1/3. The chain is 2,3,4,5-tetrahydropyridine-2,6-dicarboxylate N-succinyltransferase from Legionella pneumophila (strain Corby).